The following is a 102-amino-acid chain: Small ribosomal subunit protein uS10 (102 aa).

The protein belongs to the universal ribosomal protein uS10 family. Part of the 30S ribosomal subunit.

In terms of biological role, involved in the binding of tRNA to the ribosomes. The chain is Small ribosomal subunit protein uS10 from Rhodospirillum centenum (strain ATCC 51521 / SW).